A 449-amino-acid polypeptide reads, in one-letter code: Histone PARylation factor 1-like (449 aa).

A CCHC-type zinc finger spans residues 3 to 28 (KEDCKYWDKCYQQNPAHLSKYNHPKK). The tract at residues 18 to 93 (AHLSKYNHPK…AKGSYEAETE (76 aa)) is disordered. 2 stretches are compositionally biased toward basic and acidic residues: residues 28–41 (KQQE…EGKK) and 54–69 (EQKK…KDKS). Ser72 carries the post-translational modification Phosphoserine. Catalysis depends on Glu384, which acts as the Proton donor.

Belongs to the HPF1 family.

The protein localises to the chromosome. Its subcellular location is the nucleus. In terms of biological role, cofactor for serine ADP-ribosylation that confers serine specificity on Parp. Switches the amino acid specificity of Parp from aspartate or glutamate to serine residues. Acts by completing the active site of Parp: forms a composite active site composed of residues from HPF1/CG1218 and Parp. The polypeptide is Histone PARylation factor 1-like (Drosophila melanogaster (Fruit fly)).